The following is a 436-amino-acid chain: Protein disulfide-isomerase (436 aa).

A Thioredoxin domain is found at 216–365 (FLAGKIDPSI…VEDATESAKA (150 aa)). Active-site nucleophile residues include Cys266 and Cys269. Residues Cys266 and Cys269 are joined by a disulfide bond. The segment at 328–436 (TLVPHCRGSR…ASASSVKDEL (109 aa)) is disordered. Residues 334–343 (RGSRPVHRRE) show a composition bias toward basic residues. 2 stretches are compositionally biased toward low complexity: residues 362–377 (SAKASASSATDSAASA) and 385–436 (VKSG…KDEL). Residues 433-436 (KDEL) carry the Prevents secretion from ER motif.

Belongs to the protein disulfide isomerase family.

It is found in the endoplasmic reticulum lumen. The enzyme catalyses Catalyzes the rearrangement of -S-S- bonds in proteins.. Functionally, participates in the folding of proteins containing disulfide bonds, may be involved in glycosylation, prolyl hydroxylation and triglyceride transfer. The sequence is that of Protein disulfide-isomerase from Alternaria alternata (Alternaria rot fungus).